The chain runs to 129 residues: Glycine cleavage system H protein (129 aa).

The 82-residue stretch at 23–104 (TVTVGITQHA…SYSAWLFKLK (82 aa)) folds into the Lipoyl-binding domain. Lys-64 bears the N6-lipoyllysine mark.

The protein belongs to the GcvH family. As to quaternary structure, the glycine cleavage system is composed of four proteins: P, T, L and H. (R)-lipoate is required as a cofactor.

Functionally, the glycine cleavage system catalyzes the degradation of glycine. The H protein shuttles the methylamine group of glycine from the P protein to the T protein. The protein is Glycine cleavage system H protein of Nitrosomonas eutropha (strain DSM 101675 / C91 / Nm57).